Here is a 507-residue protein sequence, read N- to C-terminus: Pre-glycoprotein polyprotein GP complex (507 aa).

The N-myristoyl glycine; by host moiety is linked to residue Gly2. Residues 2–17 (GQVVTFLQSLPEVINE) lie on the Extracellular side of the membrane. Residues 18–33 (AINIALIAISIICILK) form a helical membrane-spanning segment. Over 34-58 (GLVNFWKCGVVQLAIFLCLAGRKCD) the chain is Cytoplasmic. Cys57 provides a ligand contact to Zn(2+). Over 59-445 (GLMIDRRHEL…QGKTPIALTD (387 aa)) the chain is Extracellular. 4 disulfide bridges follow: Cys86–Cys247, Cys292–Cys305, Cys314–Cys323, and Cys377–Cys398. N-linked (GlcNAc...) asparagine; by host glycans are attached at residues Asn89, Asn111, Asn179, and Asn240. N-linked (GlcNAc...) asparagine; by host glycosylation is found at Asn378, Asn386, Asn403, and Asn408. Residues 446 to 466 (ICFWSLVFFTSTVFLQLVGIP) form a helical membrane-spanning segment. The Cytoplasmic portion of the chain corresponds to 467–507 (THRHLVGEGCPKPHRITSNSLCACGYYKIPKRPTRWVRKGK). Residues His468, His470, Cys476, His480, Cys488, and Cys490 each contribute to the Zn(2+) site.

The protein belongs to the arenaviridae GPC protein family. Interacts with glycoprotein G2. Part of the GP complex (GP-C) together with glycoprotein G1 and glycoprotein G2. The GP-complex interacts with protein Z, which interacts with ribonucleocapsid; these interactions may induce virion budding. As to quaternary structure, homotrimer; disulfide-linked. In pre-fusion state, G1 homotrimers bind G2 homotrimers via ionic interactions. Part of the GP complex (GP-C) together with glycoprotein G2 and the stable signal peptide. The GP-complex interacts with protein Z, which interacts with ribonucleocapsid; these interactions may induce virion budding. In terms of assembly, homotrimer. Interacts with the stable signal peptide. In pre-fusion state, G2 homotrimers bind G1 homotrimers via ionic interactions. Part of the GP complex (GP-C) together with glycoprotein G1 and the stable signal peptide. Acidification in the endosome triggers rearrangements, which ultimately leads to a 6 helix bundle formed by the two heptad repeat domains (HR1 and HR2) in post-fusion state. The GP-complex interacts with protein Z, which interacts with ribonucleocapsid; these interactions may induce virion budding. Post-translationally, specific enzymatic cleavages in vivo yield mature proteins. GP-C polyprotein is cleaved in the endoplasmic reticulum by the host protease MBTPS1. Only cleaved glycoprotein is incorporated into virions. The SSP remains stably associated with the GP complex following cleavage by signal peptidase and plays crucial roles in the trafficking of GP through the secretory pathway. In terms of processing, myristoylation is necessary for GP2-mediated fusion activity.

It is found in the virion membrane. The protein resides in the host endoplasmic reticulum membrane. The protein localises to the host Golgi apparatus membrane. Its subcellular location is the host cell membrane. Functions as a cleaved signal peptide that is retained as the third component of the GP complex (GP-C). Helps to stabilize the spike complex in its native conformation. The SSP is required for efficient glycoprotein expression, post-translational maturation cleavage of G1 and G2, glycoprotein transport to the cell surface plasma membrane, formation of infectious virus particles, and acid pH-dependent glycoprotein-mediated cell fusion. In terms of biological role, forms the virion spikes together with glycoprotein G2. The glycoprotein spike trimers are connected to the underlying matrix. Interacts with the host receptor leading to virus endocytosis. Functionally, forms the virion spikes together with glycoprotein G1. The glycoprotein spike trimers are connected to the underlying matrix. Class I viral fusion protein that directs fusion of viral and host endosomal membranes, leading to delivery of the nucleocapsid into the cytoplasm. Membrane fusion is mediated by irreversible conformational changes induced by acidification. The protein is Pre-glycoprotein polyprotein GP complex of Allpahuayo mammarenavirus (isolate Rat/Peru/CLHP-2472/1997) (ALLV).